The following is a 251-amino-acid chain: MSGHSKWATTKHKKAVIDAKRGKMFAKLIKNIEVAARVGGGDPGGNPTLYDAIQKAKKSSVPNDNIERARKRGAGEEAGGADWQNITYEGYGPNGVAVLVECLTDNRNRAAGEVRVAMTRNGGNMADPGSVAYLFSRKGVVTLEKNGLTEDDVLLAVLEAGAEEVNDLGDSFEIISEPSDLVAVRTALQEAGIDYDSADASFQPSVTVPVDLEGARKVLKLVDALEDSDDVQDVYTNMDIPDDVAAQLDEE.

This sequence belongs to the TACO1 family.

The protein resides in the cytoplasm. This Mycolicibacterium smegmatis (strain ATCC 700084 / mc(2)155) (Mycobacterium smegmatis) protein is Probable transcriptional regulatory protein MSMEG_2940/MSMEI_2866.